A 651-amino-acid polypeptide reads, in one-letter code: Protein RcaC (651 aa).

The region spanning 2 to 116 (KILLVEDDDV…ELIARIRALL (115 aa)) is the Response regulatory 1 domain. At aspartate 51 the chain carries 4-aspartylphosphate. Residues 124–223 (FPLLTWGDLL…MHGRGYYLKA (100 aa)) constitute a DNA-binding region (ompR/PhoB-type). Response regulatory domains follow at residues 384 to 519 (LLLM…VNLL) and 527 to 643 (KVMI…LRRL).

Required for chromatic adaptation. Thought to be a positive regulator of phycobiliproteins. This chain is Protein RcaC (rcaC), found in Microchaete diplosiphon (Fremyella diplosiphon).